A 140-amino-acid polypeptide reads, in one-letter code: Zinc finger SWIM domain-containing protein 7 (140 aa).

Residues Y76 to A114 form an SWIM-type zinc finger.

It belongs to the SWS1 family.

It localises to the nucleus. Its function is as follows. Involved in early stages of the homologous recombination repair (HRR) pathway of double-stranded DNA breaks arising during DNA replication or induced by DNA-damaging agents. In Danio rerio (Zebrafish), this protein is Zinc finger SWIM domain-containing protein 7 (zswim7).